A 215-amino-acid polypeptide reads, in one-letter code: Small ribosomal subunit protein uS3c (215 aa).

The region spanning 43-116 (IKNYIKKNMK…KLNMAITRIA (74 aa)) is the KH type-2 domain.

This sequence belongs to the universal ribosomal protein uS3 family. In terms of assembly, part of the 30S ribosomal subunit.

Its subcellular location is the plastid. It is found in the chloroplast. This chain is Small ribosomal subunit protein uS3c (rps3), found in Morus indica (Mulberry).